Here is a 311-residue protein sequence, read N- to C-terminus: Ornithine carbamoyltransferase (311 aa).

Carbamoyl phosphate contacts are provided by residues Gln-85, Arg-109, and 136–139; that span reads HPCQ. L-ornithine contacts are provided by residues Asn-167, Asp-231, and 235–236; that span reads SM. Residues 271 to 272 and Arg-299 each bind carbamoyl phosphate; that span reads CL.

This sequence belongs to the aspartate/ornithine carbamoyltransferase superfamily. OTCase family.

The protein localises to the cytoplasm. It carries out the reaction carbamoyl phosphate + L-ornithine = L-citrulline + phosphate + H(+). It participates in amino-acid biosynthesis; L-arginine biosynthesis; L-arginine from L-ornithine and carbamoyl phosphate: step 1/3. Reversibly catalyzes the transfer of the carbamoyl group from carbamoyl phosphate (CP) to the N(epsilon) atom of ornithine (ORN) to produce L-citrulline. This is Ornithine carbamoyltransferase (argF) from Geobacillus stearothermophilus (Bacillus stearothermophilus).